The sequence spans 858 residues: M-phase phosphoprotein 8 (858 aa).

Positions 18–55 (VPDSIGRSPESEGVGAGDEEKDAATKGTVAVGDSEEDG) are disordered. Phosphoserine occurs at positions 51, 85, 136, and 138. Positions 59 to 118 (FEVERILDMKCEGGKNLYKVRWKGYTSEDDTWEPEVHLEDCKEVLLEFRKKLAENKAKAV) constitute a Chromo domain. The tract at residues 80 to 87 (WKGYTSED) is histone H3K9me3 binding. The segment at 129–175 (NDIFEADSDSDQQSDTKEDISPRKKKKKIKCKEETSPEDLRKKRTKM) is disordered. Position 144 is a phosphothreonine (threonine 144). Serine 149 and serine 164 each carry phosphoserine; by CDK1. Over residues 159 to 169 (CKEETSPEDLR) the composition is skewed to basic and acidic residues. Position 188 is a phosphoserine (serine 188). Disordered regions lie at residues 209 to 234 (ELKDSKKPKKDEIKETKELKKANKRA) and 250 to 300 (NRKT…DKTA). Phosphoserine is present on residues serine 267, serine 271, and serine 278. Over residues 273-282 (ILEDDSEDFI) the composition is skewed to acidic residues. The segment covering 283-300 (SDNREENQNVRSVRDKTA) has biased composition (basic and acidic residues). Serine 318 carries the phosphoserine modification. Residues 321 to 431 (EDAGTRVRRK…YDLDKEEKAR (111 aa)) are disordered. Positions 335-357 (RKFEEPKEIKKLESTNAFLERRA) are enriched in basic and acidic residues. Phosphothreonine; by CDK1 is present on threonine 385. Phosphoserine occurs at positions 392 and 400. Over residues 407–431 (EKEKKNEPKGKYQKRYDLDKEEKAR) the composition is skewed to basic and acidic residues. Threonine 453 carries the phosphothreonine modification. 4 ANK repeats span residues 598–627 (TGMTLVMLAAAGGQDDLLRLLITKGAKVNG), 631–660 (NGTTALIHAAEKNFLTTVAILLEAGAFVNV), 664–693 (NGETALMKACKRGNSDIVRLVIECGADCNI), and 697–726 (HQNSALYFAKQCNNVLVYELLKSHLETLSR).

Homodimer. Interacts (via chromo domain) with histone H3K9me3. Has the highest affinity for H3K9me3, and lesser affinity for H3K9me2 and H3K9me1. Component of the HUSH complex; at least composed of TASOR, PPHLN1 and MPHOSPH8. Interacts with DNMT3, EHMT1 and SETDB1. Interacts with MORC2; the interaction associateS MORC2 with the HUSH complex which recruits MORC2 to heterochromatic loci. Interacts with ZNF638; leading to recruitment of the HUSH complex to unintegrated retroviral DNA. Interacts with TASOR. Phosphorylated in M (mitotic) phase. Phosphorylation by CDK1 promotes dissociation from chromatin. In terms of tissue distribution, expressed in the spermatogonia, spermatocytes and granular cells within the cerebellum.

It is found in the nucleus. Its subcellular location is the chromosome. Its function is as follows. Heterochromatin component that specifically recognizes and binds methylated 'Lys-9' of histone H3 (H3K9me) and promotes recruitment of proteins that mediate epigenetic repression. Mediates recruitment of the HUSH complex to H3K9me3 sites: the HUSH complex is recruited to genomic loci rich in H3K9me3 and is required to maintain transcriptional silencing by promoting recruitment of SETDB1, a histone methyltransferase that mediates further deposition of H3K9me3, as well as MORC2. Binds H3K9me and promotes DNA methylation by recruiting DNMT3A to target CpG sites; these can be situated within the coding region of the gene. Mediates down-regulation of CDH1 expression. Also represses L1 retrotransposons in collaboration with MORC2 and, probably, SETDB1, the silencing is dependent of repressive epigenetic modifications, such as H3K9me3 mark. Silencing events often occur within introns of transcriptionally active genes, and lead to the down-regulation of host gene expression. The HUSH complex is also involved in the silencing of unintegrated retroviral DNA by being recruited by ZNF638: some part of the retroviral DNA formed immediately after infection remains unintegrated in the host genome and is transcriptionally repressed. The sequence is that of M-phase phosphoprotein 8 from Mus musculus (Mouse).